Reading from the N-terminus, the 535-residue chain is T-complex protein 1 subunit zeta 2 (535 aa).

This sequence belongs to the TCP-1 chaperonin family. As to quaternary structure, heterooligomeric complex of about 850 to 900 kDa that forms two stacked rings, 12 to 16 nm in diameter.

The protein resides in the cytoplasm. Molecular chaperone; assists the folding of proteins upon ATP hydrolysis. Known to play a role, in vitro, in the folding of actin and tubulin. The protein is T-complex protein 1 subunit zeta 2 of Arabidopsis thaliana (Mouse-ear cress).